The chain runs to 385 residues: Di-N-acetylchitobiase (385 aa).

Residues 1-38 form the signal peptide; sequence MSRPQLRRWRLVSSPPSGVPGLALLALLALLALRLAAG. The 347-residue stretch at 39–385 folds into the GH18 domain; the sequence is TDCPCPEPEL…EVLKPKLLQR (347 aa). Residue Glu143 is the Proton donor of the active site. 4 N-linked (GlcNAc...) asparagine glycosylation sites follow: Asn193, Asn228, Asn262, and Asn299.

It belongs to the glycosyl hydrolase 18 family.

The protein localises to the lysosome. Involved in the degradation of asparagine-linked glycoproteins. Hydrolyze of N-acetyl-beta-D-glucosamine (1-4)N-acetylglucosamine chitobiose core from the reducing end of the bond, it requires prior cleavage by glycosylasparaginase. The chain is Di-N-acetylchitobiase (CTBS) from Homo sapiens (Human).